The primary structure comprises 749 residues: Catalase-peroxidase (749 aa).

A compositionally biased stretch (basic and acidic residues) spans 1-12 (MSSDTSDTRPPH). Residues 1–40 (MSSDTSDTRPPHSDSGTQSNSESENPIIDSPEPKAHAPLT) form a disordered region. The segment covering 14-24 (DSGTQSNSESE) has biased composition (polar residues). The segment at residues 113 to 240 (WHAAGTYRIF…FGATTMGLIY (128 aa)) is a cross-link (tryptophyl-tyrosyl-methioninium (Trp-Tyr) (with M-266)). His114 serves as the catalytic Proton acceptor. Positions 240 to 266 (YVNPEGPEGKPDPLAAAHDIRETFGRM) form a cross-link, tryptophyl-tyrosyl-methioninium (Tyr-Met) (with W-113). A heme b-binding site is contributed by His281.

This sequence belongs to the peroxidase family. Peroxidase/catalase subfamily. In terms of assembly, homodimer or homotetramer. It depends on heme b as a cofactor. Formation of the three residue Trp-Tyr-Met cross-link is important for the catalase, but not the peroxidase activity of the enzyme.

It catalyses the reaction H2O2 + AH2 = A + 2 H2O. The catalysed reaction is 2 H2O2 = O2 + 2 H2O. In terms of biological role, bifunctional enzyme with both catalase and broad-spectrum peroxidase activity. The sequence is that of Catalase-peroxidase from Mycobacterium sp. (strain JLS).